A 675-amino-acid chain; its full sequence is UvrABC system protein B (675 aa).

In terms of domain architecture, Helicase ATP-binding spans 30-417 (SGIEQGNRNQ…SDQIVEQVVR (388 aa)). Position 43 to 50 (43 to 50 (GVTGSGKT)) interacts with ATP. The Beta-hairpin motif lies at 96 to 119 (YYDYYQPEAYVPSSDTFIEKDAAI). The region spanning 434 to 601 (QVDDVLSEIN…AVRQKVKEID (168 aa)) is the Helicase C-terminal domain. Residues 637–672 (AKHMSKLEKEMLKASKELQFEQAARLRDEILRLKAQ) form the UVR domain.

It belongs to the UvrB family. As to quaternary structure, forms a heterotetramer with UvrA during the search for lesions. Interacts with UvrC in an incision complex.

It localises to the cytoplasm. Functionally, the UvrABC repair system catalyzes the recognition and processing of DNA lesions. A damage recognition complex composed of 2 UvrA and 2 UvrB subunits scans DNA for abnormalities. Upon binding of the UvrA(2)B(2) complex to a putative damaged site, the DNA wraps around one UvrB monomer. DNA wrap is dependent on ATP binding by UvrB and probably causes local melting of the DNA helix, facilitating insertion of UvrB beta-hairpin between the DNA strands. Then UvrB probes one DNA strand for the presence of a lesion. If a lesion is found the UvrA subunits dissociate and the UvrB-DNA preincision complex is formed. This complex is subsequently bound by UvrC and the second UvrB is released. If no lesion is found, the DNA wraps around the other UvrB subunit that will check the other stand for damage. The polypeptide is UvrABC system protein B (Acinetobacter baylyi (strain ATCC 33305 / BD413 / ADP1)).